The sequence spans 309 residues: Sulfate adenylyltransferase subunit 2 (309 aa).

The protein belongs to the PAPS reductase family. CysD subfamily. In terms of assembly, heterodimer composed of CysD, the smaller subunit, and CysN.

The catalysed reaction is sulfate + ATP + H(+) = adenosine 5'-phosphosulfate + diphosphate. Its pathway is sulfur metabolism; hydrogen sulfide biosynthesis; sulfite from sulfate: step 1/3. Functionally, with CysN forms the ATP sulfurylase (ATPS) that catalyzes the adenylation of sulfate producing adenosine 5'-phosphosulfate (APS) and diphosphate, the first enzymatic step in sulfur assimilation pathway. APS synthesis involves the formation of a high-energy phosphoric-sulfuric acid anhydride bond driven by GTP hydrolysis by CysN coupled to ATP hydrolysis by CysD. This is Sulfate adenylyltransferase subunit 2 from Mycolicibacterium vanbaalenii (strain DSM 7251 / JCM 13017 / BCRC 16820 / KCTC 9966 / NRRL B-24157 / PYR-1) (Mycobacterium vanbaalenii).